Reading from the N-terminus, the 312-residue chain is Putative S-adenosyl-L-methionine-dependent methyltransferase Mjls_0078 (312 aa).

Residues D134 and 163-164 (DL) each bind S-adenosyl-L-methionine.

It belongs to the UPF0677 family.

Exhibits S-adenosyl-L-methionine-dependent methyltransferase activity. The polypeptide is Putative S-adenosyl-L-methionine-dependent methyltransferase Mjls_0078 (Mycobacterium sp. (strain JLS)).